We begin with the raw amino-acid sequence, 241 residues long: Major prion protein (241 aa).

The signal sequence occupies residues 1 to 15 (MLVLFVATWSDLGLC). The segment at 16 to 31 (KKRPKPGGWNTGGSRY) is interaction with ADGRG6. Residues 16–223 (KKRPKPGGWN…ESQAYYQRGS (208 aa)) are interaction with GRB2, ERI3 and SYN1. Residues 18-101 (RPKPGGWNTG…WHKPNKPKTS (84 aa)) are disordered. 5 consecutive repeat copies span residues 44–52 (PQGGGGWGQ), 53–60 (PHGGGWGQ), 61–68 (PHGGGWGQ), 69–76 (PHGGGWGQ), and 77–84 (PHGGGWGQ). Residues 44–84 (PQGGGGWGQPHGGGWGQPHGGGWGQPHGGGWGQPHGGGWGQ) form a 5 X 8 AA tandem repeats of P-H-G-G-G-W-G-Q region. The span at 45–88 (QGGGGWGQPHGGGWGQPHGGGWGQPHGGGWGQPHGGGWGQGGGT) shows a compositional bias: gly residues. Residues His-54, Gly-55, Gly-56, His-62, Gly-63, Gly-64, His-70, Gly-71, Gly-72, His-78, Gly-79, and Gly-80 each coordinate Cu(2+). Residues 91-101 (QWHKPNKPKTS) are compositionally biased toward basic residues. Cys-172 and Cys-207 are oxidised to a cystine. 2 N-linked (GlcNAc...) asparagine glycosylation sites follow: Asn-174 and Asn-190. Ser-223 carries GPI-anchor amidated serine lipidation. Positions 224–241 (SMVLFSSPPVILLISFLI) are cleaved as a propeptide — removed in mature form.

It belongs to the prion family. Monomer and homodimer. Has a tendency to aggregate into amyloid fibrils containing a cross-beta spine, formed by a steric zipper of superposed beta-strands. Soluble oligomers may represent an intermediate stage on the path to fibril formation. Copper binding may promote oligomerization. Interacts with GRB2, APP, ERI3/PRNPIP and SYN1. Mislocalized cytosolically exposed PrP interacts with MGRN1; this interaction alters MGRN1 subcellular location and causes lysosomal enlargement. Interacts with APP. Interacts with KIAA1191. Interacts with ADGRG6.

Its subcellular location is the cell membrane. It localises to the golgi apparatus. In terms of biological role, its primary physiological function is unclear. May play a role in neuronal development and synaptic plasticity. May be required for neuronal myelin sheath maintenance. May promote myelin homeostasis through acting as an agonist for ADGRG6 receptor. May play a role in iron uptake and iron homeostasis. Soluble oligomers are toxic to cultured neuroblastoma cells and induce apoptosis (in vitro). Association with GPC1 (via its heparan sulfate chains) targets PRNP to lipid rafts. Also provides Cu(2+) or Zn(2+) for the ascorbate-mediated GPC1 deaminase degradation of its heparan sulfate side chains. This is Major prion protein (PRNP) from Mandrillus sphinx (Mandrill).